Here is a 153-residue protein sequence, read N- to C-terminus: 6,7-dimethyl-8-ribityllumazine synthase (153 aa).

5-amino-6-(D-ribitylamino)uracil contacts are provided by residues Phe-22, 56–58, and 80–82; these read AFE and AVI. 85–86 is a binding site for (2S)-2-hydroxy-3-oxobutyl phosphate; it reads ST. His-88 (proton donor) is an active-site residue. Phe-113 lines the 5-amino-6-(D-ribitylamino)uracil pocket. Arg-127 is a binding site for (2S)-2-hydroxy-3-oxobutyl phosphate.

It belongs to the DMRL synthase family.

It carries out the reaction (2S)-2-hydroxy-3-oxobutyl phosphate + 5-amino-6-(D-ribitylamino)uracil = 6,7-dimethyl-8-(1-D-ribityl)lumazine + phosphate + 2 H2O + H(+). It functions in the pathway cofactor biosynthesis; riboflavin biosynthesis; riboflavin from 2-hydroxy-3-oxobutyl phosphate and 5-amino-6-(D-ribitylamino)uracil: step 1/2. Its function is as follows. Catalyzes the formation of 6,7-dimethyl-8-ribityllumazine by condensation of 5-amino-6-(D-ribitylamino)uracil with 3,4-dihydroxy-2-butanone 4-phosphate. This is the penultimate step in the biosynthesis of riboflavin. The protein is 6,7-dimethyl-8-ribityllumazine synthase of Clostridium botulinum (strain Eklund 17B / Type B).